The chain runs to 223 residues: Receptor-transporting protein 2 (223 aa).

Over 1–193 the chain is Cytoplasmic; it reads MSTSLTTCEW…KKGQAGFISS (193 aa). The 3CxxC-type zinc-finger motif lies at 52–161; the sequence is ASGRFHCSWC…SEFCEACQEG (110 aa). A helical membrane pass occupies residues 194-216; sequence FFSFRWCLFWGTLCLVIVYLQFF. Topologically, residues 217-223 are extracellular; that stretch reads RGRSGFL.

This sequence belongs to the TMEM7 family. In terms of assembly, interacts with olfactory receptors. Predominantly expressed in olfactory and vomeronasal organs, in mature olfactory sensory neurons.

The protein resides in the cell membrane. Functionally, specifically promotes functional cell surface expression of olfactory receptors, but not of other GPCRs. In Mus musculus (Mouse), this protein is Receptor-transporting protein 2 (Rtp2).